The sequence spans 603 residues: Elongation factor 4 (603 aa).

One can recognise a tr-type G domain in the interval 7–189 (SRLRNFCIIA…AVVDRIPSPK (183 aa)). GTP contacts are provided by residues 19–24 (DHGKST) and 136–139 (NKVD).

Belongs to the TRAFAC class translation factor GTPase superfamily. Classic translation factor GTPase family. LepA subfamily.

It is found in the cell inner membrane. It catalyses the reaction GTP + H2O = GDP + phosphate + H(+). Its function is as follows. Required for accurate and efficient protein synthesis under certain stress conditions. May act as a fidelity factor of the translation reaction, by catalyzing a one-codon backward translocation of tRNAs on improperly translocated ribosomes. Back-translocation proceeds from a post-translocation (POST) complex to a pre-translocation (PRE) complex, thus giving elongation factor G a second chance to translocate the tRNAs correctly. Binds to ribosomes in a GTP-dependent manner. This Prochlorococcus marinus (strain NATL1A) protein is Elongation factor 4.